Consider the following 338-residue polypeptide: Taste receptor type 2 member 39 (338 aa).

Topologically, residues 1 to 30 (MLGRCFPPDTKEKQQLRMTKLCDPAESELS) are extracellular. The helical transmembrane segment at 31-51 (PFLITLILAVLLAEYLIGIIA) threads the bilayer. Residues 52–74 (NGFIMAIHAAEWVQNKAVSTSGR) are Cytoplasmic-facing. Residues 75 to 95 (ILVFLSVSRIALQSLMMLEIT) form a helical membrane-spanning segment. At 96 to 116 (ISSTSLSFYSEDAVYYAFKIS) the chain is on the extracellular side. Residues 117–137 (FIFLNFCSLWFAAWLSFFYFV) traverse the membrane as a helical segment. Topologically, residues 138–156 (KIANFSYPLFLKLRWRITG) are cytoplasmic. Residues 157-177 (LIPWLLWLSVFISFSHSMFCI) traverse the membrane as a helical segment. Residues 178 to 205 (NICTVYCNNSFPIHSSNSTKKTYLSEIN) lie on the Extracellular side of the membrane. N-linked (GlcNAc...) asparagine glycans are attached at residues Asn185 and Asn194. The chain crosses the membrane as a helical span at residues 206–226 (VVGLAFFFNLGIVTPLIMFIL). The Cytoplasmic portion of the chain corresponds to 227–262 (TATLLILSLKRHTLHMGSNATGSNDPSMEAHMGAIK). Residues 263 to 283 (AISYFLILYIFNAVALFIYLS) form a helical membrane-spanning segment. Residues 284 to 291 (NMFDINSL) lie on the Extracellular side of the membrane. The helical transmembrane segment at 292 to 312 (WNNLCQIIMAAYPAGHSILPI) threads the bilayer. Topologically, residues 313 to 338 (QDNPGLRRAWKRLQLRLHLYPKEWTL) are cytoplasmic.

This sequence belongs to the G-protein coupled receptor T2R family.

It is found in the membrane. In terms of biological role, receptor that may play a role in the perception of bitterness and is gustducin-linked. May play a role in sensing the chemical composition of the gastrointestinal content. The activity of this receptor may stimulate alpha gustducin, mediate PLC-beta-2 activation and lead to the gating of TRPM5. The protein is Taste receptor type 2 member 39 (TAS2R39) of Pan paniscus (Pygmy chimpanzee).